The following is an 867-amino-acid chain: MFFEILIGASAKAVKDFISHCYSRLKSIYYSFKRWLMEISGQFKAHDAFVNMCFGHMADIEDFEAELAEEFAEREDEVEEARSLLKLLVAQKSKTGVTEAWTDFFTKSRGGVYAPLSCEPTRQELEAKSEKLEKLLEEQHQFEVRAAKKYIKEKGRGFINCWNDLRSRLRLVKDVKDEAKDNARAAAKIGAEMFAPVDVQDLYSFTEVKKVETGLMKEVVKERNGEEEKHLEPIMEEVRSIKDTAEARDAASTWITETVKLKNSTLNADELSLATIARYVENVGDKFKLDIASKTYLKQVASMSVPIPTNKDIKLKMVLQSPEARARREPLDVLDSVGFLEGLCTASGFESPFPILGLPEIAVTDGARLRKVSSNIRYLSQTHLGLVYKAPNASLHNALVAVERRVFTVGKGDKAIYPPRPEHDIFTDTMDYFQKSIIEEVGYCRTYPAQLLANSYSAGKRAMYHKAIASLRTVPYHQKDANVQAFLKKEKHWMTKDIAPRLICPRSKRYNIILGTRLKFNEKKIMHAIDSVFGSPTVLSGYDNFKQGRIIAKKWQKFACPVAIGVDASRFDQHVSEQALKWEHGIYNGIFGDSELALALEHQITNNIKMFVEDKMLRFKVRGHRMSGDINTSMGNKLIMCGMMHAYFKKLGVEAELCNNGDDCVIITDRANEKLFDGMYDHFLQYGFNMVTEKPVYELEQLEFCQSKPVSINGKYRMVRRPDSIGKDSTTLLSMLNQSDVKSYMSAVAQCGLVLNAGVPILESFYKCLYRSSGYKKVSEEFIKNVISYGTDERLQGRRTYNETPITNHSRMSYWESFGVDPKIQQIVERYYDGLTVSAQLQSVKVTTPHLQSILLSIPENHSQIEY.

The RdRp catalytic domain occupies 561-676 (PVAIGVDASR…ITDRANEKLF (116 aa)).

It belongs to the luteoviruses RNA polymerase family.

The enzyme catalyses RNA(n) + a ribonucleoside 5'-triphosphate = RNA(n+1) + diphosphate. Probable polymerase. This is Putative RNA-directed RNA polymerase from Barley yellow dwarf virus (isolate P-PAV) (BYDV).